The chain runs to 219 residues: MKFKDFFVIGTDTDVGKTYVSTLLYKALKKYNFQYYKPIQSGCFLKDGKLTAPDVDFLTKFVGIDYDDSMVTYTLKEEVSPHLASEMEGIRIEIENVKRHYEDLKKKHSNILVEGAGGLYVPLIRDIFYIYDLIKLFNLPVVLVCGTKVGAINHTMLTLNALDTMGIKLHGLVFNNYRGQFFEDDNIKVVLALSKIKNYLIIKNGQKEISDKEIEKFFN.

Position 14–19 (14–19) interacts with ATP; it reads DVGKTY. Position 18 (Thr18) interacts with Mg(2+). Lys37 is an active-site residue. Ser41 contacts substrate. ATP contacts are provided by residues Asp54, 114–117, and 175–176; these read EGAG and NN. The Mg(2+) site is built by Asp54 and Glu114.

The protein belongs to the dethiobiotin synthetase family. Homodimer. Mg(2+) serves as cofactor.

It localises to the cytoplasm. It carries out the reaction (7R,8S)-7,8-diammoniononanoate + CO2 + ATP = (4R,5S)-dethiobiotin + ADP + phosphate + 3 H(+). Its pathway is cofactor biosynthesis; biotin biosynthesis; biotin from 7,8-diaminononanoate: step 1/2. Functionally, catalyzes a mechanistically unusual reaction, the ATP-dependent insertion of CO2 between the N7 and N8 nitrogen atoms of 7,8-diaminopelargonic acid (DAPA, also called 7,8-diammoniononanoate) to form a ureido ring. The polypeptide is ATP-dependent dethiobiotin synthetase BioD (Fusobacterium nucleatum subsp. nucleatum (strain ATCC 25586 / DSM 15643 / BCRC 10681 / CIP 101130 / JCM 8532 / KCTC 2640 / LMG 13131 / VPI 4355)).